We begin with the raw amino-acid sequence, 72 residues long: Large ribosomal subunit protein bL31c (72 aa).

This sequence belongs to the bacterial ribosomal protein bL31 family. Type A subfamily. Part of the 50S ribosomal subunit.

It localises to the plastid. It is found in the chloroplast. Binds the 23S rRNA. The chain is Large ribosomal subunit protein bL31c (rpl31) from Phaeodactylum tricornutum (strain CCAP 1055/1).